The sequence spans 369 residues: Methionine import ATP-binding protein MetN 1 (369 aa).

A disordered region spans residues 1-26 (MTTMTVPPSLLPLEPFPTAPDTRAST). Positions 29–265 (IRLHGLGKRY…PRHAVTRSLL (237 aa)) constitute an ABC transporter domain. 62-69 (GRSGAGKS) is a binding site for ATP.

Belongs to the ABC transporter superfamily. Methionine importer (TC 3.A.1.24) family. In terms of assembly, the complex is composed of two ATP-binding proteins (MetN), two transmembrane proteins (MetI) and a solute-binding protein (MetQ).

The protein resides in the cell inner membrane. The catalysed reaction is L-methionine(out) + ATP + H2O = L-methionine(in) + ADP + phosphate + H(+). It carries out the reaction D-methionine(out) + ATP + H2O = D-methionine(in) + ADP + phosphate + H(+). Part of the ABC transporter complex MetNIQ involved in methionine import. Responsible for energy coupling to the transport system. This Pseudomonas aeruginosa (strain UCBPP-PA14) protein is Methionine import ATP-binding protein MetN 1.